Here is a 195-residue protein sequence, read N- to C-terminus: uncharacterized protein (195 aa).

The next 4 helical transmembrane spans lie at 89–106 (SWIS…PLLP), 111–128 (HLPL…VWKR), 149–168 (VKIS…VLLL), and 172–194 (LNAL…FLNI).

The protein localises to the cell membrane. This is an uncharacterized protein from Bacillus subtilis (strain 168).